The following is a 704-amino-acid chain: Polyribonucleotide nucleotidyltransferase (704 aa).

Residues aspartate 485 and aspartate 491 each coordinate Mg(2+). The 60-residue stretch at 552-611 (PKTETIQIDPDKIRSVIGAGGKVINKIIQDTGVKIDIKEDGSVFVSSSDHAGVKEAIKII) folds into the KH domain. One can recognise an S1 motif domain in the interval 621-689 (GEIYLGKVTK…SQGRINLSRK (69 aa)).

The protein belongs to the polyribonucleotide nucleotidyltransferase family. Mg(2+) serves as cofactor.

Its subcellular location is the cytoplasm. The enzyme catalyses RNA(n+1) + phosphate = RNA(n) + a ribonucleoside 5'-diphosphate. Its function is as follows. Involved in mRNA degradation. Catalyzes the phosphorolysis of single-stranded polyribonucleotides processively in the 3'- to 5'-direction. The chain is Polyribonucleotide nucleotidyltransferase from Clostridium botulinum (strain Eklund 17B / Type B).